A 393-amino-acid chain; its full sequence is uncharacterized protein (393 aa).

Positions alanine 12–glutamate 70 constitute a TRAM domain. Residues cysteine 83, cysteine 89, cysteine 92, and cysteine 166 each contribute to the [4Fe-4S] cluster site. S-adenosyl-L-methionine is bound by residues glutamine 221, tyrosine 250, glutamate 273, and aspartate 316. The Nucleophile role is filled by cysteine 343.

This sequence belongs to the class I-like SAM-binding methyltransferase superfamily. RNA M5U methyltransferase family.

This is an uncharacterized protein from Bdellovibrio bacteriovorus (strain ATCC 15356 / DSM 50701 / NCIMB 9529 / HD100).